Reading from the N-terminus, the 162-residue chain is NADH-quinone oxidoreductase subunit I (162 aa).

4Fe-4S ferredoxin-type domains lie at 52-82 (LRRY…IEAG) and 93-122 (TRYD…EGPN). [4Fe-4S] cluster-binding residues include Cys62, Cys65, Cys68, Cys72, Cys102, Cys105, Cys108, and Cys112.

This sequence belongs to the complex I 23 kDa subunit family. As to quaternary structure, NDH-1 is composed of 14 different subunits. Subunits NuoA, H, J, K, L, M, N constitute the membrane sector of the complex. [4Fe-4S] cluster is required as a cofactor.

It localises to the cell inner membrane. The catalysed reaction is a quinone + NADH + 5 H(+)(in) = a quinol + NAD(+) + 4 H(+)(out). Functionally, NDH-1 shuttles electrons from NADH, via FMN and iron-sulfur (Fe-S) centers, to quinones in the respiratory chain. The immediate electron acceptor for the enzyme in this species is believed to be ubiquinone. Couples the redox reaction to proton translocation (for every two electrons transferred, four hydrogen ions are translocated across the cytoplasmic membrane), and thus conserves the redox energy in a proton gradient. The chain is NADH-quinone oxidoreductase subunit I from Methylorubrum populi (strain ATCC BAA-705 / NCIMB 13946 / BJ001) (Methylobacterium populi).